We begin with the raw amino-acid sequence, 529 residues long: Bifunctional purine biosynthesis protein PurH (529 aa).

In terms of domain architecture, MGS-like spans 1–148 (MQQRRPVRRA…KNHKDVAIVV (148 aa)).

The protein belongs to the PurH family.

The enzyme catalyses (6R)-10-formyltetrahydrofolate + 5-amino-1-(5-phospho-beta-D-ribosyl)imidazole-4-carboxamide = 5-formamido-1-(5-phospho-D-ribosyl)imidazole-4-carboxamide + (6S)-5,6,7,8-tetrahydrofolate. The catalysed reaction is IMP + H2O = 5-formamido-1-(5-phospho-D-ribosyl)imidazole-4-carboxamide. It participates in purine metabolism; IMP biosynthesis via de novo pathway; 5-formamido-1-(5-phospho-D-ribosyl)imidazole-4-carboxamide from 5-amino-1-(5-phospho-D-ribosyl)imidazole-4-carboxamide (10-formyl THF route): step 1/1. It functions in the pathway purine metabolism; IMP biosynthesis via de novo pathway; IMP from 5-formamido-1-(5-phospho-D-ribosyl)imidazole-4-carboxamide: step 1/1. In Salmonella heidelberg (strain SL476), this protein is Bifunctional purine biosynthesis protein PurH.